Consider the following 193-residue polypeptide: NAD(P)H-quinone oxidoreductase subunit I (193 aa).

2 4Fe-4S ferredoxin-type domains span residues 55-84 (GRIH…VDWE) and 95-124 (KHYS…MTEE). Residues C64, C67, C70, C74, C104, C107, C110, and C114 each contribute to the [4Fe-4S] cluster site. Positions 169–193 (LDPHDLPSGNQRSGKRPEEIIAESD) are disordered.

It belongs to the complex I 23 kDa subunit family. NDH-1 is composed of at least 11 different subunits. Requires [4Fe-4S] cluster as cofactor.

It localises to the cellular thylakoid membrane. It catalyses the reaction a plastoquinone + NADH + (n+1) H(+)(in) = a plastoquinol + NAD(+) + n H(+)(out). The enzyme catalyses a plastoquinone + NADPH + (n+1) H(+)(in) = a plastoquinol + NADP(+) + n H(+)(out). Its function is as follows. NDH-1 shuttles electrons from an unknown electron donor, via FMN and iron-sulfur (Fe-S) centers, to quinones in the respiratory and/or the photosynthetic chain. The immediate electron acceptor for the enzyme in this species is believed to be plastoquinone. Couples the redox reaction to proton translocation, and thus conserves the redox energy in a proton gradient. This is NAD(P)H-quinone oxidoreductase subunit I from Rippkaea orientalis (strain PCC 8801 / RF-1) (Cyanothece sp. (strain PCC 8801)).